We begin with the raw amino-acid sequence, 355 residues long: 45 kDa calcium-binding protein (355 aa).

Positions 1–29 (MASRQGPLCGLAPCCLWLLGVILLMNASA) are cleaved as a signal peptide. N-linked (GlcNAc...) asparagine glycosylation is present at Asn-26. EF-hand domains are found at residues 91-126 (KSRR…KTAE) and 130-165 (EAVA…TKGH). Position 92 is a phosphoserine (Ser-92). Asp-104, Asn-106, Asp-108, Arg-110, Glu-115, Asp-143, Asp-145, Asp-147, His-149, and Glu-154 together coordinate Ca(2+). Phosphothreonine occurs at positions 186 and 210. EF-hand domains follow at residues 226–261 (MLQF…TVEN), 271–306 (WVRD…MNEF), and 307–342 (SALN…FTGS). Residues Asp-239, Asp-241, Asp-243, Lys-245, and Glu-250 each contribute to the Ca(2+) site. Thr-258 is modified (phosphothreonine). Asp-284, Asn-286, and Asp-288 together coordinate Ca(2+). Residue Thr-292 is modified to Phosphothreonine. Ca(2+) contacts are provided by Glu-295, Asp-320, Asn-322, Asn-324, Tyr-326, and Glu-331. Residues 302 to 355 (PMNEFSALNEAKQMIAIADENQNHYLEPEEVLKYSEFFTGSKLVDYARSVHEEF) form a necessary for intracellular retention in Golgi apparatus lumen region.

The protein belongs to the CREC family.

It localises to the golgi apparatus lumen. Its function is as follows. May regulate calcium-dependent activities in the endoplasmic reticulum lumen or post-ER compartment. This Capra hircus (Goat) protein is 45 kDa calcium-binding protein (SDF4).